Reading from the N-terminus, the 348-residue chain is Ileal sodium/bile acid cotransporter (348 aa).

Over 1–28 (MDNSSVCPPNATVCEGDSCVVPESNFNA) the chain is Extracellular. Asn3 and Asn10 each carry an N-linked (GlcNAc...) asparagine glycan. A helical transmembrane segment spans residues 29–49 (ILNTVMSTVLTILLAMVMFSM). Topologically, residues 50-87 (GCNVEVHKFLGHIKRPWGIFVGFLCQFGIMPLTGFILS) are cytoplasmic. Residues 88–108 (VASGILPVQAVVVLIMGCCPG) form a helical membrane-spanning segment. The Extracellular segment spans residues 109 to 126 (GTGSNILAYWIDGDMDLS). A helical membrane pass occupies residues 127 to 147 (VSMTTCSTLLALGMMPLCLFV). At 148–157 (YTKMWVDSGT) the chain is on the cytoplasmic side. A helical transmembrane segment spans residues 158–178 (IVIPYDSIGISLVALVIPVSF). The Extracellular portion of the chain corresponds to 179–195 (GMFVNHKWPQKAKIILK). A helical membrane pass occupies residues 196 to 216 (IGSITGVILIVLIAVIGGILY). Topologically, residues 217–224 (QSAWIIEP) are cytoplasmic. A helical transmembrane segment spans residues 225-245 (KLWIIGTIFPIAGYSLGFFLA). At 246-284 (RLAGQPWYRCRTVALETGMQNTQLCSTIVQLSFSPEDLN) the chain is on the extracellular side. A helical membrane pass occupies residues 285–305 (LVFTFPLIYTVFQLVFAAVIL). Residues 306–348 (GIYVTYRKCYGKNDAEFLEKTDNEMDSRPSFDETNKGFQPDEK) are Cytoplasmic-facing. The tract at residues 328 to 348 (NEMDSRPSFDETNKGFQPDEK) is disordered. Ser335 is modified (phosphoserine).

Belongs to the bile acid:sodium symporter (BASS) (TC 2.A.28) family. In terms of assembly, monomer and homodimer. In terms of tissue distribution, expressed in ileum.

The protein localises to the membrane. The enzyme catalyses taurocholate(out) + 2 Na(+)(out) = taurocholate(in) + 2 Na(+)(in). The catalysed reaction is cholate(out) + 2 Na(+)(out) = cholate(in) + 2 Na(+)(in). It carries out the reaction taurochenodeoxycholate(out) + 2 Na(+)(out) = taurochenodeoxycholate(in) + 2 Na(+)(in). It catalyses the reaction tauroursodeoxycholate(out) + 2 Na(+)(out) = tauroursodeoxycholate(in) + 2 Na(+)(in). The enzyme catalyses glycocholate(out) + 2 Na(+)(out) = glycocholate(in) + 2 Na(+)(in). The catalysed reaction is tauronorcholate(out) + 2 Na(+)(out) = tauronorcholate(in) + 2 Na(+)(in). It carries out the reaction tauroallocholate(out) + 2 Na(+)(out) = tauroallocholate(in) + 2 Na(+)(in). It catalyses the reaction taurodeoxycholate(out) + 2 Na(+)(out) = taurodeoxycholate(in) + 2 Na(+)(in). The enzyme catalyses tauro-beta-muricholate(out) + 2 Na(+)(out) = tauro-beta-muricholate(in) + 2 Na(+)(in). Plays a critical role in the sodium-dependent reabsorption of bile acids from the lumen of the small intestine. Transports various bile acids, unconjugated or conjugated, such as cholate and taurocholate. Also responsible for bile acid transport in the renal proximal tubules, a salvage mechanism that helps conserve bile acids. Works collaboratively with the Na(+)-taurocholate cotransporting polypeptide (NTCP), the organic solute transporter (OST), and the bile salt export pump (BSEP), to ensure efficacious biological recycling of bile acids during enterohepatic circulation. The sequence is that of Ileal sodium/bile acid cotransporter (Slc10a2) from Mus musculus (Mouse).